Consider the following 199-residue polypeptide: Phosphoserine phosphatase RsbX (199 aa).

The PPM-type phosphatase domain maps to 11–198; that stretch reads QTLVYQLNKE…DDLTYILGQL (188 aa).

The catalysed reaction is O-phospho-L-serine + H2O = L-serine + phosphate. It carries out the reaction O-phospho-D-serine + H2O = D-serine + phosphate. Its function is as follows. Negative regulator of sigma-B activity. Dephosphorylates RsbS. Plays a role both in maintaining low sigma-B activity during growth and in reestablishing prestress sigma-B activity after induction. Could have a negative feedback role by indirectly communicating sigma-B protein levels. The protein is Phosphoserine phosphatase RsbX (rsbX) of Bacillus subtilis (strain 168).